A 1136-amino-acid chain; its full sequence is Type I inositol polyphosphate 5-phosphatase 13 (1136 aa).

WD repeat units follow at residues 147-185 (ETQT…EAGC), 205-244 (VTTS…VSHD), 259-297 (AHRG…KSLL), 436-475 (EDTR…RDVN), and 515-552 (SHNE…PLDN). Catalytic stretches follow at residues 782–798 (DMVA…FGIT) and 861–876 (KKRI…YRDT). Lysine 940 participates in a covalent cross-link: Glycyl lysine isopeptide (Lys-Gly) (interchain with G-Cter in ubiquitin). The tract at residues 1104 to 1136 (KNLGGSRRYPTDITRNGSTRPRTEDSVRRGKSR) is disordered. Residues 1124–1136 (PRTEDSVRRGKSR) are compositionally biased toward basic and acidic residues.

Belongs to the inositol polyphosphate 5-phosphatase family. As to quaternary structure, interacts with KIN10, but not with PHOT1. Requires Mg(2+) as cofactor. As to expression, expressed in young seedlings and flowers. Highly expressed in anther and pollen grains, but not in pistils. Not detected in maturated roots, stems and rosette leaves.

The protein localises to the nucleus. The enzyme catalyses 1D-myo-inositol 1,4,5-trisphosphate + H2O = 1D-myo-inositol 1,4-bisphosphate + phosphate. Its function is as follows. Converts inositol 1,4,5-trisphosphate (Ins(1,4,5)P3) to inositol 1,4-bisphosphate. Modulates cotyledon vein development through regulating auxin homeostasis. Involved in blue light responses. Decreases the amount of KIN10 degraded by the proteasome under low nutrient conditions. Participates with IP5P12 in the control of Ins(1,4,5)P3/Ca(2+) levels that is crucial for maintaining pollen dormancy and regulating early germination of pollen. May modulate auxin transport by regulating vesicle trafficking and thereby plays a role in root gravitropism. The protein is Type I inositol polyphosphate 5-phosphatase 13 of Arabidopsis thaliana (Mouse-ear cress).